We begin with the raw amino-acid sequence, 520 residues long: Amine oxidase [flavin-containing] B (520 aa).

At 1–489 the chain is on the cytoplasmic side; sequence MNSKCDVVVV…TFLERHLPSV (489 aa). N6-acetyllysine is present on Lys52. Position 397 is an S-8alpha-FAD cysteine (Cys397). The helical; Anchor for type IV membrane protein transmembrane segment at 490-516 threads the bilayer; that stretch reads PGLLRLIRLTTVVSAVALGFLAQKRGL. The Mitochondrial intermembrane portion of the chain corresponds to 517 to 520; that stretch reads LLRI.

Belongs to the flavin monoamine oxidase family. Monomer, homo- or heterodimer (containing two subunits of similar size). Each subunit contains a covalently bound flavin. Enzymatically active as monomer. Requires FAD as cofactor.

It is found in the mitochondrion outer membrane. The enzyme catalyses a secondary aliphatic amine + O2 + H2O = a primary amine + an aldehyde + H2O2. The catalysed reaction is (R)-adrenaline + O2 + H2O = (R)-3,4-dihydroxymandelaldehyde + methylamine + H2O2. It carries out the reaction a primary methyl amine + O2 + H2O = an aldehyde + H2O2 + NH4(+). It catalyses the reaction benzylamine + O2 + H2O = benzaldehyde + H2O2 + NH4(+). The enzyme catalyses dopamine + O2 + H2O = 3,4-dihydroxyphenylacetaldehyde + H2O2 + NH4(+). The catalysed reaction is tyramine + O2 + H2O = (4-hydroxyphenyl)acetaldehyde + H2O2 + NH4(+). It carries out the reaction (R)-noradrenaline + O2 + H2O = (R)-3,4-dihydroxymandelaldehyde + H2O2 + NH4(+). It catalyses the reaction 2-phenylethylamine + O2 + H2O = 2-phenylacetaldehyde + H2O2 + NH4(+). The enzyme catalyses N-acetylputrescine + O2 + H2O = 4-acetamidobutanal + H2O2 + NH4(+). Functionally, catalyzes the oxidative deamination of primary and some secondary amines such as neurotransmitters, and exogenous amines including the tertiary amine, neurotoxin 1-methyl-4-phenyl-1,2,3,6-tetrahydropyridine (MPTP), with concomitant reduction of oxygen to hydrogen peroxide and participates in the metabolism of neuroactive and vasoactive amines in the central nervous system and peripheral tissues. Preferentially degrades benzylamine and phenylethylamine. In Cavia porcellus (Guinea pig), this protein is Amine oxidase [flavin-containing] B.